A 417-amino-acid chain; its full sequence is Serine hydroxymethyltransferase (417 aa).

Residue Lys54 is modified to N6-acetyllysine. Residues Leu121 and 125–127 (GHL) contribute to the (6S)-5,6,7,8-tetrahydrofolate site. Lys229 is modified (N6-(pyridoxal phosphate)lysine). N6-acetyllysine occurs at positions 250, 285, and 354. Position 355–357 (355–357 (SPF)) interacts with (6S)-5,6,7,8-tetrahydrofolate. Lys375 carries the post-translational modification N6-acetyllysine.

The protein belongs to the SHMT family. In terms of assembly, homodimer. It depends on pyridoxal 5'-phosphate as a cofactor.

It localises to the cytoplasm. The enzyme catalyses (6R)-5,10-methylene-5,6,7,8-tetrahydrofolate + glycine + H2O = (6S)-5,6,7,8-tetrahydrofolate + L-serine. The protein operates within one-carbon metabolism; tetrahydrofolate interconversion. It participates in amino-acid biosynthesis; glycine biosynthesis; glycine from L-serine: step 1/1. Catalyzes the reversible interconversion of serine and glycine with tetrahydrofolate (THF) serving as the one-carbon carrier. This reaction serves as the major source of one-carbon groups required for the biosynthesis of purines, thymidylate, methionine, and other important biomolecules. Also exhibits THF-independent aldolase activity toward beta-hydroxyamino acids, producing glycine and aldehydes, via a retro-aldol mechanism. The sequence is that of Serine hydroxymethyltransferase from Escherichia coli O157:H7.